The chain runs to 380 residues: Phospho-N-acetylmuramoyl-pentapeptide-transferase (380 aa).

Transmembrane regions (helical) follow at residues 25 to 45, 70 to 90, 98 to 118, 142 to 162, 173 to 193, 209 to 229, 245 to 265, 272 to 294, and 357 to 377; these read RAAA…PAII, TTPT…VLLW, VLLA…DDYL, VLCG…TLPG, VLVV…VTFI, GLSS…AYVL, GAGE…GFLW, QVFM…AILL, and QVVV…LSTL.

It belongs to the glycosyltransferase 4 family. MraY subfamily. Mg(2+) is required as a cofactor.

Its subcellular location is the cell inner membrane. The catalysed reaction is UDP-N-acetyl-alpha-D-muramoyl-L-alanyl-gamma-D-glutamyl-meso-2,6-diaminopimeloyl-D-alanyl-D-alanine + di-trans,octa-cis-undecaprenyl phosphate = di-trans,octa-cis-undecaprenyl diphospho-N-acetyl-alpha-D-muramoyl-L-alanyl-D-glutamyl-meso-2,6-diaminopimeloyl-D-alanyl-D-alanine + UMP. It participates in cell wall biogenesis; peptidoglycan biosynthesis. Catalyzes the initial step of the lipid cycle reactions in the biosynthesis of the cell wall peptidoglycan: transfers peptidoglycan precursor phospho-MurNAc-pentapeptide from UDP-MurNAc-pentapeptide onto the lipid carrier undecaprenyl phosphate, yielding undecaprenyl-pyrophosphoryl-MurNAc-pentapeptide, known as lipid I. This chain is Phospho-N-acetylmuramoyl-pentapeptide-transferase, found in Gemmatimonas aurantiaca (strain DSM 14586 / JCM 11422 / NBRC 100505 / T-27).